Reading from the N-terminus, the 392-residue chain is Tryptophan 2,3-dioxygenase (392 aa).

Substrate-binding positions include 57-61 (FIVTH) and R128. H313 lines the heme pocket. T328 contributes to the substrate binding site.

The protein belongs to the tryptophan 2,3-dioxygenase family. As to quaternary structure, homotetramer. Dimer of dimers. Heme is required as a cofactor.

The catalysed reaction is L-tryptophan + O2 = N-formyl-L-kynurenine. Its pathway is amino-acid degradation; L-tryptophan degradation via kynurenine pathway; L-kynurenine from L-tryptophan: step 1/2. The protein operates within pigment biosynthesis; ommochrome biosynthesis. Functionally, heme-dependent dioxygenase that catalyzes the oxidative cleavage of the L-tryptophan (L-Trp) pyrrole ring and converts L-tryptophan to N-formyl-L-kynurenine. Catalyzes the oxidative cleavage of the indole moiety. This chain is Tryptophan 2,3-dioxygenase, found in Anopheles gambiae (African malaria mosquito).